The primary structure comprises 856 residues: DNA mismatch repair protein MutS (856 aa).

615–622 (GPNMGGKS) contacts ATP. A compositionally biased stretch (polar residues) spans 798 to 807 (ETTGHQQAIK). The tract at residues 798–817 (ETTGHQQAIKNPSKAPREEQ) is disordered.

It belongs to the DNA mismatch repair MutS family.

In terms of biological role, this protein is involved in the repair of mismatches in DNA. It is possible that it carries out the mismatch recognition step. This protein has a weak ATPase activity. This is DNA mismatch repair protein MutS from Photobacterium profundum (strain SS9).